Consider the following 353-residue polypeptide: Mitogen-activated protein kinase mpkB (353 aa).

In terms of domain architecture, Protein kinase spans 21–309 (YEIQDVIGEG…VEEALRHPYL (289 aa)). Residues 27 to 35 (IGEGAYGVV) and Lys-50 each bind ATP. Asp-145 functions as the Proton acceptor in the catalytic mechanism.

This sequence belongs to the protein kinase superfamily. Ser/Thr protein kinase family. MAP kinase subfamily. Requires Mg(2+) as cofactor.

The protein resides in the nucleus. The catalysed reaction is L-seryl-[protein] + ATP = O-phospho-L-seryl-[protein] + ADP + H(+). The enzyme catalyses L-threonyl-[protein] + ATP = O-phospho-L-threonyl-[protein] + ADP + H(+). Its activity is regulated as follows. Activated by threonine and tyrosine phosphorylation. In terms of biological role, mitogen-activated protein kinase (MAPK) that plays a role in conidiation and regulation of secondary metabolite biosynthesis. Acts as a repressor of dihydroxynaphthalene (DHN)-melanin production. The chain is Mitogen-activated protein kinase mpkB from Aspergillus fumigatus (strain CBS 144.89 / FGSC A1163 / CEA10) (Neosartorya fumigata).